Reading from the N-terminus, the 595-residue chain is P2X purinoceptor 7 (595 aa).

Residues 1-22 (MPACCSWNDVLQYETNKVTRIQ) lie on the Cytoplasmic side of the membrane. Residue cysteine 4 is the site of S-palmitoyl cysteine attachment. A helical transmembrane segment spans residues 23-46 (STNYGTVKWVLHMIVFSYISFALV). Topologically, residues 47 to 328 (SDKLYQRKEP…ILVFGTGGKF (282 aa)) are extracellular. An N-linked (GlcNAc...) asparagine glycan is attached at asparagine 74. Disulfide bonds link cysteine 119/cysteine 168, cysteine 129/cysteine 152, and cysteine 135/cysteine 162. Residues arginine 125 and arginine 133 each carry the ADP-ribosylarginine; by ART2B modification. Asparagine 187 is a glycosylation site (N-linked (GlcNAc...) asparagine). Threonine 189 provides a ligand contact to ATP. 2 N-linked (GlcNAc...) asparagine glycosylation sites follow: asparagine 202 and asparagine 213. A disulfide bridge links cysteine 216 with cysteine 226. A glycan (N-linked (GlcNAc...) asparagine) is linked at asparagine 241. Residues cysteine 260 and cysteine 269 are joined by a disulfide bond. Arginine 294 and lysine 311 together coordinate ATP. The chain crosses the membrane as a helical span at residues 329–353 (DIIQLVVYIGSTLSYFGLATVCIDL). Serine 342 is a Na(+) binding site. The Cytoplasmic segment spans residues 354–595 (LINTYSSAFC…GQYSGFKYPY (242 aa)). Residues 360–377 (SAFCRSGVYPYCKCCEPC) form a C-cys anchor region. 3 S-palmitoyl cysteine lipidation sites follow: cysteine 363, cysteine 374, and cysteine 377. Serine 390 carries the post-translational modification Phosphoserine. Residues 395–595 (KPTLKYVSFV…GQYSGFKYPY (201 aa)) are cytoplasmic ballast. Residues cysteine 479, cysteine 499, and cysteine 506 each coordinate Zn(2+). GTP is bound by residues arginine 546, histidine 547, tyrosine 550, and alanine 567. Cysteine 572 is a binding site for Zn(2+). Residues lysine 583, serine 589, and glycine 590 each coordinate GTP.

Belongs to the P2X receptor family. As to quaternary structure, homotrimers. Interacts with LAMA3, ITGB2, ACTB, ACTN4, SVIL, MPP3, HSPA1, HSPCB, HSPA8, PIK230 and PTPRB. Interacts (via C-terminus) with EMP2. In terms of processing, phosphorylation results in its inactivation. Post-translationally, ADP-ribosylation at Arg-125 is necessary and sufficient to activate P2RX7 and gate the channel. Palmitoylation of several cysteines in the C-terminal cytoplasmic tail is required for efficient localization to cell surface. Palmitoylation prevents channel desensitization by physically anchoring the palmitoylated groups to the membrane.

It localises to the cell membrane. It carries out the reaction Ca(2+)(in) = Ca(2+)(out). The catalysed reaction is K(+)(in) = K(+)(out). The enzyme catalyses Na(+)(in) = Na(+)(out). Activated by high extracellular ATP levels (0.1-2.5 mM). The synthetic analog 2'(3')-O-(4-benzoylbenzoyl)ATP (BzATP) acts as a potent agonist. Does not undergo desensitization, instead, undergoes a facilitation process where currents progressively increase with repetitive or prolonged agonist application. Palmitoylation prevents channel desensitization. The permeability of the P2RX7 channel is modulated by the amount of cholesterol in the plasma membrane. In terms of biological role, ATP-gated nonselective transmembrane cation channel. Requires high millimolar-range concentrations of ATP to become activated. ATP binding trigers the rapid opening of the channel and allows Na(+) and Ca(2+) influx and K(+) efflux. Has also the ability to form a large pore in the cell membrane, allowing the passage of large cationic molecules. In microglia, may mediate NADPH transport across the plasma membrane. In immune cells, P2RX7 acts as a molecular sensor in pathological inflammatory states by detecting and responding to high local concentrations of extracellar ATP. In microglial cells, P2RX7 activation leads to the release of pro-inflammatory cytokines, such as IL-1beta and IL-18, through the activation of the NLRP3 inflammasome and caspase-1. Cooperates with KCNK6 to activate NLRP3 inflammasome. Activates death pathways leading to apoptosis and autophagy. Activates death pathways leading to pyroptosis. The chain is P2X purinoceptor 7 (P2rx7) from Mus musculus (Mouse).